Here is a 90-residue protein sequence, read N- to C-terminus: Sec-independent protein translocase protein TatA (90 aa).

Residues 1 to 21 form a helical membrane-spanning segment; it reads MGLPGGWELVLIVGVLVLLFG. Basic and acidic residues predominate over residues 42–60; it reads EARGMKEDEEAAKREKQAK. The segment at 42–90 is disordered; that stretch reads EARGMKEDEEAAKREKQAKSEPQQLTAGESSAPTVASPVEETQRNDSKK. Residues 61–75 show a composition bias toward polar residues; sequence SEPQQLTAGESSAPT.

This sequence belongs to the TatA/E family. As to quaternary structure, the Tat system comprises two distinct complexes: a TatABC complex, containing multiple copies of TatA, TatB and TatC subunits, and a separate TatA complex, containing only TatA subunits. Substrates initially bind to the TatABC complex, which probably triggers association of the separate TatA complex to form the active translocon.

It is found in the cell membrane. Functionally, part of the twin-arginine translocation (Tat) system that transports large folded proteins containing a characteristic twin-arginine motif in their signal peptide across membranes. TatA could form the protein-conducting channel of the Tat system. This chain is Sec-independent protein translocase protein TatA, found in Saccharopolyspora erythraea (strain ATCC 11635 / DSM 40517 / JCM 4748 / NBRC 13426 / NCIMB 8594 / NRRL 2338).